The following is a 515-amino-acid chain: Arabinose import ATP-binding protein AraG 2 (515 aa).

Residues 1-22 (MTMQTMTAASGHDAEAGTPPDG) form a disordered region. ABC transporter domains are found at residues 25-260 (LALD…MVGR) and 260-511 (RSIE…LIKL). 57–64 (GENGAGKS) contacts ATP.

It belongs to the ABC transporter superfamily. Arabinose importer (TC 3.A.1.2.2) family. As to quaternary structure, the complex is composed of two ATP-binding proteins (AraG), two transmembrane proteins (AraH) and a solute-binding protein (AraF).

The protein localises to the cell inner membrane. It carries out the reaction L-arabinose(out) + ATP + H2O = L-arabinose(in) + ADP + phosphate + H(+). In terms of biological role, part of the ABC transporter complex AraFGH involved in arabinose import. Responsible for energy coupling to the transport system. The chain is Arabinose import ATP-binding protein AraG 2 from Burkholderia cenocepacia (strain HI2424).